Consider the following 228-residue polypeptide: Probable septum site-determining protein MinC (228 aa).

This sequence belongs to the MinC family. Interacts with MinD and FtsZ.

Its function is as follows. Cell division inhibitor that blocks the formation of polar Z ring septums. Rapidly oscillates between the poles of the cell to destabilize FtsZ filaments that have formed before they mature into polar Z rings. Prevents FtsZ polymerization. The chain is Probable septum site-determining protein MinC from Pectobacterium atrosepticum (strain SCRI 1043 / ATCC BAA-672) (Erwinia carotovora subsp. atroseptica).